The primary structure comprises 62 residues: Large ribosomal subunit protein bL28 (62 aa).

Belongs to the bacterial ribosomal protein bL28 family.

In Thermoanaerobacter pseudethanolicus (strain ATCC 33223 / 39E) (Clostridium thermohydrosulfuricum), this protein is Large ribosomal subunit protein bL28.